A 161-amino-acid chain; its full sequence is Protein PLANT CADMIUM RESISTANCE 12 (161 aa).

The chain crosses the membrane as a helical span at residues 71-89; that stretch reads AGLIHLALGFIGCSWLYAF.

This sequence belongs to the cornifelin family.

The protein localises to the membrane. Functionally, may be involved in heavy metals transport. This chain is Protein PLANT CADMIUM RESISTANCE 12 (PCR12), found in Arabidopsis thaliana (Mouse-ear cress).